The sequence spans 122 residues: Large ribosomal subunit protein uL14 (122 aa).

This sequence belongs to the universal ribosomal protein uL14 family. As to quaternary structure, part of the 50S ribosomal subunit. Forms a cluster with proteins L3 and L19. In the 70S ribosome, L14 and L19 interact and together make contacts with the 16S rRNA in bridges B5 and B8.

Its function is as follows. Binds to 23S rRNA. Forms part of two intersubunit bridges in the 70S ribosome. The sequence is that of Large ribosomal subunit protein uL14 from Bradyrhizobium diazoefficiens (strain JCM 10833 / BCRC 13528 / IAM 13628 / NBRC 14792 / USDA 110).